An 83-amino-acid polypeptide reads, in one-letter code: Blackelin-4 (83 aa).

A signal peptide spans 1-24 (MSSGGLLLLLGLLTLREGLTPVSS). In terms of domain architecture, BPTI/Kunitz inhibitor spans 31–81 (CELPDDRGPCRGIFHAFYYNPDQRQCLEFIYGGCYGNANNFKTIDECKRTC). Intrachain disulfides connect C31–C81, C40–C64, and C56–C77.

Its subcellular location is the secreted. Functionally, serine protease inhibitor. The polypeptide is Blackelin-4 (Pseudechis porphyriacus (Red-bellied black snake)).